Consider the following 106-residue polypeptide: MSSHPTKITFFEFLTPLITAGKKTITIRDESESHYVPNTEVEVFTLETDRKVCDIKILSVAPLKFDDINEFHAEQEAIELPKLKELIREIYPNINELYVIEYELIK.

In terms of domain architecture, ASCH spans 9-105; sequence TFFEFLTPLI…ELYVIEYELI (97 aa). Lysine 23 (proton acceptor) is an active-site residue. Threonine 26 (nucleophile) is an active-site residue. Catalysis depends on glutamate 76, which acts as the Proton donor.

This sequence belongs to the N(4)-acetylcytidine amidohydrolase family.

It carries out the reaction N(4)-acetylcytidine + H2O = cytidine + acetate + H(+). It catalyses the reaction N(4)-acetyl-2'-deoxycytidine + H2O = 2'-deoxycytidine + acetate + H(+). The catalysed reaction is N(4)-acetylcytosine + H2O = cytosine + acetate + H(+). Catalyzes the hydrolysis of N(4)-acetylcytidine (ac4C). This Vibrio campbellii (strain ATCC BAA-1116) protein is N(4)-acetylcytidine amidohydrolase.